The primary structure comprises 569 residues: Pyrophosphate--fructose 6-phosphate 1-phosphotransferase subunit beta 2 (569 aa).

Glycine 107 serves as a coordination point for diphosphate. Aspartate 201 contacts Mg(2+). Residues 229 to 231 (TID), 268 to 269 (KY), 276 to 278 (MGR), glutamate 337, and 442 to 445 (YEGR) each bind substrate. Aspartate 231 functions as the Proton acceptor in the catalytic mechanism.

Belongs to the phosphofructokinase type A (PFKA) family. PPi-dependent PFK group II subfamily. Clade 'Long' sub-subfamily. As to quaternary structure, tetramer of two alpha (regulatory) and two beta (catalytic) chains. It depends on Mg(2+) as a cofactor.

It is found in the cytoplasm. The enzyme catalyses beta-D-fructose 6-phosphate + diphosphate = beta-D-fructose 1,6-bisphosphate + phosphate + H(+). The protein operates within carbohydrate degradation; glycolysis; D-glyceraldehyde 3-phosphate and glycerone phosphate from D-glucose: step 3/4. With respect to regulation, allosterically activated by fructose 2,6-bisphosphate. Its function is as follows. Catalytic subunit of pyrophosphate--fructose 6-phosphate 1-phosphotransferase. Catalyzes the phosphorylation of D-fructose 6-phosphate, the first committing step of glycolysis. Uses inorganic phosphate (PPi) as phosphoryl donor instead of ATP like common ATP-dependent phosphofructokinases (ATP-PFKs), which renders the reaction reversible, and can thus function both in glycolysis and gluconeogenesis. In Arabidopsis thaliana (Mouse-ear cress), this protein is Pyrophosphate--fructose 6-phosphate 1-phosphotransferase subunit beta 2.